Consider the following 128-residue polypeptide: Large ribosomal subunit protein bL12 (128 aa).

This sequence belongs to the bacterial ribosomal protein bL12 family. Homodimer. Part of the ribosomal stalk of the 50S ribosomal subunit. Forms a multimeric L10(L12)X complex, where L10 forms an elongated spine to which 2 to 4 L12 dimers bind in a sequential fashion. Binds GTP-bound translation factors.

Its function is as follows. Forms part of the ribosomal stalk which helps the ribosome interact with GTP-bound translation factors. Is thus essential for accurate translation. This chain is Large ribosomal subunit protein bL12, found in Kineococcus radiotolerans (strain ATCC BAA-149 / DSM 14245 / SRS30216).